A 185-amino-acid polypeptide reads, in one-letter code: Photosystem I assembly protein Ycf4 (185 aa).

A run of 2 helical transmembrane segments spans residues Asn-21–Tyr-43 and Gly-63–Leu-85.

The protein belongs to the Ycf4 family.

It is found in the plastid. The protein localises to the chloroplast thylakoid membrane. In terms of biological role, seems to be required for the assembly of the photosystem I complex. This is Photosystem I assembly protein Ycf4 from Aegilops crassa (Persian goatgrass).